The sequence spans 112 residues: MNLAPTTLLLFAATALAELVGCYLPYLWLRNGGSVWLLLPTALRLASFVWLLSLHPDASGRVYAAYGGVYIASALGLWLWWVDGVTPTRWDLLGAVCCLFGMAIIMFAPRSA.

4 consecutive transmembrane segments (helical) span residues 8-28, 32-52, 62-82, and 92-112; these read LLLF…PYLW, GGSV…VWLL, VYAA…LWWV, and LLGA…PRSA.

It belongs to the UPF0060 family.

It localises to the cell inner membrane. The protein is UPF0060 membrane protein XOO1694 of Xanthomonas oryzae pv. oryzae (strain MAFF 311018).